The primary structure comprises 407 residues: Argininosuccinate synthase (407 aa).

ATP contacts are provided by residues 11–19 (AYSGGLDTS) and Ala-38. Tyr-89 and Ser-94 together coordinate L-citrulline. Position 119 (Gly-119) interacts with ATP. Positions 121, 125, and 126 each coordinate L-aspartate. Position 125 (Asn-125) interacts with L-citrulline. L-citrulline-binding residues include Arg-129, Ser-180, Ser-189, Glu-265, and Tyr-277.

It belongs to the argininosuccinate synthase family. Type 1 subfamily. Homotetramer.

The protein localises to the cytoplasm. The enzyme catalyses L-citrulline + L-aspartate + ATP = 2-(N(omega)-L-arginino)succinate + AMP + diphosphate + H(+). The protein operates within amino-acid biosynthesis; L-arginine biosynthesis; L-arginine from L-ornithine and carbamoyl phosphate: step 2/3. This chain is Argininosuccinate synthase, found in Magnetococcus marinus (strain ATCC BAA-1437 / JCM 17883 / MC-1).